A 410-amino-acid polypeptide reads, in one-letter code: Venom metalloproteinase 2 (410 aa).

The N-terminal stretch at 1-22 is a signal peptide; the sequence is MDTFILTYSILFLALFIESIHS. Residues asparagine 64, asparagine 112, asparagine 187, asparagine 231, asparagine 292, and asparagine 307 are each glycosylated (N-linked (GlcNAc...) asparagine). Positions 214 to 410 constitute a Peptidase M12B domain; sequence FYPKLLVLVD…NNNVSKFIWS (197 aa). Residue histidine 365 participates in Zn(2+) binding. Glutamate 366 is an active-site residue. Zn(2+)-binding residues include histidine 369 and histidine 375. N-linked (GlcNAc...) asparagine glycosylation is present at asparagine 403.

It in the C-terminal section; belongs to the venom metalloproteinase (M12B) family. Monomer. The cofactor is Zn(2+). As to expression, expressed by the venom gland.

The protein resides in the secreted. With respect to regulation, the gelatinase activity is inhibited by EDTA. Its function is as follows. The recombinant protein has gelatinase activity. In vivo, injection of this recombinant into fifth instar L.oleracea (host) larvae results in partial insect mortality associated with the molt to sixth instar, with surviving insects showing retarded development and growth. This Eulophus pennicornis (Parasitoid wasp) protein is Venom metalloproteinase 2.